A 239-amino-acid polypeptide reads, in one-letter code: 1-(5-phosphoribosyl)-5-[(5-phosphoribosylamino)methylideneamino] imidazole-4-carboxamide isomerase (239 aa).

The Proton acceptor role is filled by D8. D129 acts as the Proton donor in catalysis.

This sequence belongs to the HisA/HisF family.

It is found in the cytoplasm. It catalyses the reaction 1-(5-phospho-beta-D-ribosyl)-5-[(5-phospho-beta-D-ribosylamino)methylideneamino]imidazole-4-carboxamide = 5-[(5-phospho-1-deoxy-D-ribulos-1-ylimino)methylamino]-1-(5-phospho-beta-D-ribosyl)imidazole-4-carboxamide. The protein operates within amino-acid biosynthesis; L-histidine biosynthesis; L-histidine from 5-phospho-alpha-D-ribose 1-diphosphate: step 4/9. The sequence is that of 1-(5-phosphoribosyl)-5-[(5-phosphoribosylamino)methylideneamino] imidazole-4-carboxamide isomerase from Cereibacter sphaeroides (strain ATCC 17029 / ATH 2.4.9) (Rhodobacter sphaeroides).